The following is a 1423-amino-acid chain: Protein phosphatase Slingshot homolog 2 (1423 aa).

Disordered regions lie at residues 1–37 and 51–70; these read MALV…PRSI and LPRG…NKHA. Residues 9-18 show a composition bias toward low complexity; sequence SPTPSTTSSP. S17, S25, and S36 each carry phosphoserine. The 56-residue stretch at 248 to 303 folds into the DEK-C domain; it reads ERTERLIKTKLREIMMQKDLENITSKEIRTELEMQMVCNLREFKEFIDNEMIVILG. A Tyrosine-protein phosphatase domain is found at 307–448; that stretch reads SPTQIFEHVF…LEEYQGILLA (142 aa). C392 acts as the Phosphocysteine intermediate in catalysis. S461, S487, S534, S631, and S633 each carry phosphoserine. 7 disordered regions span residues 698–725, 833–858, 878–950, 967–991, 1021–1042, 1074–1105, and 1207–1226; these read EMAA…DEDQ, HSST…MHSG, RQEQ…HCER, APQD…QRAV, SLGH…KQGL, PQVL…KGDC, and PEAC…DLSH. Residues 884–904 show a composition bias toward polar residues; it reads HGTASAGPTLSNRKNSKNDSS. Composition is skewed to basic and acidic residues over residues 910 to 932, 976 to 987, and 1033 to 1042; these read PKWK…EPSK, SRSKKQEGDLKK, and PSKEGEKQGL. S1217 carries the post-translational modification Phosphoserine. T1422 carries the post-translational modification Phosphothreonine.

This sequence belongs to the protein-tyrosine phosphatase family. As to quaternary structure, interacts with filamentous actin. As to expression, expressed in brain, heart, liver, skeletal muscle, testis and thymus. Also expressed at lower levels in kidney, small intestine and spleen. Within testicular seminiferous tubules expressed in germ cells and spermatocytes, where it has a cytoplasmic localization, and round spermatids, where it concentrates in the acrosomal region next to the nucleus.

It is found in the cytoplasm. The protein resides in the cytoskeleton. Its subcellular location is the cell junction. It localises to the focal adhesion. The protein localises to the cytoplasmic vesicle. It is found in the secretory vesicle. The protein resides in the acrosome. The enzyme catalyses O-phospho-L-tyrosyl-[protein] + H2O = L-tyrosyl-[protein] + phosphate. The catalysed reaction is O-phospho-L-seryl-[protein] + H2O = L-seryl-[protein] + phosphate. It carries out the reaction O-phospho-L-threonyl-[protein] + H2O = L-threonyl-[protein] + phosphate. Functionally, protein phosphatase which regulates actin filament dynamics. Dephosphorylates and activates the actin binding/depolymerizing factor cofilin, which subsequently binds to actin filaments and stimulates their disassembly. Inhibitory phosphorylation of cofilin is mediated by LIMK1, which may also be dephosphorylated and inactivated by this protein. Required for spermatogenesis. Involved in acrosome biogenesis, probably by regulating cofilin-mediated actin cytoskeleton remodeling during proacrosomal vesicle fusion and/or Golgi to perinuclear vesicle trafficking. The chain is Protein phosphatase Slingshot homolog 2 (Ssh2) from Mus musculus (Mouse).